A 391-amino-acid polypeptide reads, in one-letter code: MVTQNKKILIITGSFGNGHMQVTQSIVNQLNDMNLDHLSVIEHDLFMEAHPILTSICKKWYINSFKYFRNMYKGFYYSRPDKLDKCFYKYYGLNKLINLLIKEKPDLILLTFPTPVMSVLTEQFNINIPVATVMTDYRLHKNWITPYSTRYYVATKETKQDFIDVGIDPSTVKVTGIPIDNKFETPINQKQWLIDNNLDPDKQTILMSAGAFGVSKGFDTMITDILAKSANAQVVMICGKSKELKRSLTAKFKSNENVLILGYTKHMNEWMASSQLMITKPGGITITEGFARCIPMIFLNPAPGQELENALYFEEKGFGKIADTPEEAIKIVASLTNGNEQLTNMISTMEQDKIKYATQTICRDLLDLIGHSSQPQEIYGKVPLYARFFVK.

This sequence belongs to the glycosyltransferase 28 family. UgtP subfamily.

Its subcellular location is the cell membrane. The catalysed reaction is a 1,2-diacyl-3-O-(beta-D-glucopyranosyl)-sn-glycerol + UDP-alpha-D-glucose = a 1,2-diacyl-3-O-(beta-D-Glc-(1-&gt;6)-beta-D-Glc)-sn-glycerol + UDP + H(+). The enzyme catalyses a 1,2-diacyl-sn-glycerol + UDP-alpha-D-glucose = a 1,2-diacyl-3-O-(beta-D-glucopyranosyl)-sn-glycerol + UDP + H(+). The protein operates within glycolipid metabolism; diglucosyl-diacylglycerol biosynthesis. Its function is as follows. Processive glucosyltransferase involved in the biosynthesis of both the bilayer- and non-bilayer-forming membrane glucolipids. Is able to successively transfer two glucosyl residues to diacylglycerol (DAG), thereby catalyzing the formation of beta-monoglucosyl-DAG (3-O-(beta-D-glucopyranosyl)-1,2-diacyl-sn-glycerol) and beta-diglucosyl-DAG (3-O-(beta-D-glucopyranosyl-beta-(1-&gt;6)-D-glucopyranosyl)-1,2-diacyl-sn-glycerol). Beta-diglucosyl-DAG is the predominant glycolipid found in Bacillales and is also used as a membrane anchor for lipoteichoic acid (LTA). This Staphylococcus aureus (strain MW2) protein is Processive diacylglycerol beta-glucosyltransferase.